A 279-amino-acid polypeptide reads, in one-letter code: Hydroxyethylthiazole kinase (279 aa).

Substrate is bound at residue Met-58. Lys-134 and Thr-180 together coordinate ATP. Gly-207 is a binding site for substrate.

It belongs to the Thz kinase family. Mg(2+) serves as cofactor.

The enzyme catalyses 5-(2-hydroxyethyl)-4-methylthiazole + ATP = 4-methyl-5-(2-phosphooxyethyl)-thiazole + ADP + H(+). Its pathway is cofactor biosynthesis; thiamine diphosphate biosynthesis; 4-methyl-5-(2-phosphoethyl)-thiazole from 5-(2-hydroxyethyl)-4-methylthiazole: step 1/1. Its function is as follows. Catalyzes the phosphorylation of the hydroxyl group of 4-methyl-5-beta-hydroxyethylthiazole (THZ). The polypeptide is Hydroxyethylthiazole kinase (Methanoculleus marisnigri (strain ATCC 35101 / DSM 1498 / JR1)).